Consider the following 237-residue polypeptide: uncharacterized protein (237 aa).

The next 7 membrane-spanning stretches (helical) occupy residues 19-39 (ILNG…GLAW), 51-71 (YDSP…YGLS), 81-101 (IAGV…ASLV), 106-126 (IIIV…AGLL), 136-156 (FIIM…AALM), 159-179 (RPIW…ISHG), and 209-229 (LYYY…TLVW).

The protein localises to the cell membrane. This is an uncharacterized protein from Escherichia coli (strain K12).